The sequence spans 506 residues: ATP synthase subunit alpha, chloroplastic (506 aa).

170–177 (GDRQTGKT) serves as a coordination point for ATP.

The protein belongs to the ATPase alpha/beta chains family. In terms of assembly, F-type ATPases have 2 components, CF(1) - the catalytic core - and CF(0) - the membrane proton channel. CF(1) has five subunits: alpha(3), beta(3), gamma(1), delta(1), epsilon(1). CF(0) has four main subunits: a, b, b' and c.

The protein resides in the plastid. Its subcellular location is the chloroplast thylakoid membrane. The enzyme catalyses ATP + H2O + 4 H(+)(in) = ADP + phosphate + 5 H(+)(out). In terms of biological role, produces ATP from ADP in the presence of a proton gradient across the membrane. The alpha chain is a regulatory subunit. The protein is ATP synthase subunit alpha, chloroplastic of Chlorella vulgaris (Green alga).